Reading from the N-terminus, the 666-residue chain is Phosphoenolpyruvate carboxykinase (ATP) (666 aa).

Disordered regions lie at residues 1 to 68 and 91 to 132; these read MATP…AHSP and ASLT…HPAA. Residues 48–58 are compositionally biased toward polar residues; it reads APTTPNRSAPT. A compositionally biased stretch (low complexity) spans 109–123; the sequence is KGEAAAQGAPSTPRA. Residue 364 to 371 participates in ATP binding; that stretch reads GLSGTGKT.

Belongs to the phosphoenolpyruvate carboxykinase (ATP) family.

It localises to the cytoplasm. The enzyme catalyses oxaloacetate + ATP = phosphoenolpyruvate + ADP + CO2. It participates in carbohydrate biosynthesis; gluconeogenesis. The sequence is that of Phosphoenolpyruvate carboxykinase (ATP) from Zea mays (Maize).